The chain runs to 411 residues: Cytochrome P450 monooxygenase sirE (411 aa).

N-linked (GlcNAc...) asparagine glycosylation is found at asparagine 12 and asparagine 149. The chain crosses the membrane as a helical span at residues 181 to 203 (FLNVISIFTVMMASLNVLYDILA). N-linked (GlcNAc...) asparagine glycosylation occurs at asparagine 342. Cysteine 352 lines the heme pocket.

The protein belongs to the cytochrome P450 family. It depends on heme as a cofactor.

The protein resides in the membrane. It participates in mycotoxin biosynthesis. In terms of biological role, cytochrome P450 monooxygenase; part of the gene cluster that mediates the biosynthesis of sirodesmin PL, an epipolythiodioxopiperazine (ETP) characterized by a disulfide bridged cyclic dipeptide and that acts as a phytotoxin which is involved in the blackleg didease of canola. SirD catalyzes the O-prenylation of L-tyrosine (L-Tyr) in the presence of dimethylallyl diphosphate (DMAPP) to yield 4-O-dimethylallyl-L-Tyr, and therefore represents probably the first pathway-specific enzyme in the biosynthesis of sirodesmin PL. 4-O-dimethylallyl-L-Tyr, then undergoes condensation with L-Ser in a reaction catalyzed by the non-ribosomal peptide synthase sirP to form the diketopiperazine (DKP) backbone. Further bishydroxylation of the DKP performed by the cytochrome P450 monooxygenase sirC leads to the production of the intermediate phomamide. This step is essential to form the reactive thiol group required for toxicity of sirodesmin PL. The next steps of sirodesmin biosynthesis are not well understood yet, but some predictions could be made from intermediate compounds identification. Phomamide is converted into phomalizarine via oxidation, probably by sirT. Further oxidation, methylation (by sirM or sirN) and reduction steps convert phomalizarine to deacetyl sirodesmin. Finally, acetyltransferase sirH probably acetylates deacetyl sirodesmin to produce sirodesmin PL. The polypeptide is Cytochrome P450 monooxygenase sirE (Leptosphaeria maculans (Blackleg fungus)).